A 258-amino-acid polypeptide reads, in one-letter code: Pimeloyl-[acyl-carrier protein] methyl ester esterase (258 aa).

The 227-residue stretch at 16–242 (LVLLHGWGLN…AAHAPFISHP (227 aa)) folds into the AB hydrolase-1 domain. Substrate is bound by residues W22, 82-83 (SM), and 143-147 (FLALQ). The active-site Nucleophile is S82. Active-site residues include D207 and H235. H235 is a binding site for substrate.

It belongs to the AB hydrolase superfamily. Carboxylesterase BioH family. As to quaternary structure, monomer.

It is found in the cytoplasm. It catalyses the reaction 6-carboxyhexanoyl-[ACP] methyl ester + H2O = 6-carboxyhexanoyl-[ACP] + methanol + H(+). The protein operates within cofactor biosynthesis; biotin biosynthesis. Functionally, the physiological role of BioH is to remove the methyl group introduced by BioC when the pimeloyl moiety is complete. It allows to synthesize pimeloyl-ACP via the fatty acid synthetic pathway through the hydrolysis of the ester bonds of pimeloyl-ACP esters. The chain is Pimeloyl-[acyl-carrier protein] methyl ester esterase from Yersinia pseudotuberculosis serotype IB (strain PB1/+).